Reading from the N-terminus, the 673-residue chain is UvrABC system protein B (673 aa).

In terms of domain architecture, Helicase ATP-binding spans glutamate 26 to arginine 183. Glycine 39–threonine 46 lines the ATP pocket. The short motif at tyrosine 92–valine 115 is the Beta-hairpin element. The Helicase C-terminal domain occupies glutamine 431–leucine 597. Positions glutamine 633–leucine 668 constitute a UVR domain.

It belongs to the UvrB family. As to quaternary structure, forms a heterotetramer with UvrA during the search for lesions. Interacts with UvrC in an incision complex.

Its subcellular location is the cytoplasm. Functionally, the UvrABC repair system catalyzes the recognition and processing of DNA lesions. A damage recognition complex composed of 2 UvrA and 2 UvrB subunits scans DNA for abnormalities. Upon binding of the UvrA(2)B(2) complex to a putative damaged site, the DNA wraps around one UvrB monomer. DNA wrap is dependent on ATP binding by UvrB and probably causes local melting of the DNA helix, facilitating insertion of UvrB beta-hairpin between the DNA strands. Then UvrB probes one DNA strand for the presence of a lesion. If a lesion is found the UvrA subunits dissociate and the UvrB-DNA preincision complex is formed. This complex is subsequently bound by UvrC and the second UvrB is released. If no lesion is found, the DNA wraps around the other UvrB subunit that will check the other stand for damage. The protein is UvrABC system protein B of Salmonella heidelberg (strain SL476).